A 223-amino-acid chain; its full sequence is Thiamine-phosphate synthase (223 aa).

4-amino-2-methyl-5-(diphosphooxymethyl)pyrimidine-binding positions include 47-51 (QLRDK) and N84. D85 and D104 together coordinate Mg(2+). Residue S123 participates in 4-amino-2-methyl-5-(diphosphooxymethyl)pyrimidine binding. 150 to 152 (TPT) is a binding site for 2-[(2R,5Z)-2-carboxy-4-methylthiazol-5(2H)-ylidene]ethyl phosphate. K153 serves as a coordination point for 4-amino-2-methyl-5-(diphosphooxymethyl)pyrimidine. G182 contributes to the 2-[(2R,5Z)-2-carboxy-4-methylthiazol-5(2H)-ylidene]ethyl phosphate binding site.

It belongs to the thiamine-phosphate synthase family. It depends on Mg(2+) as a cofactor.

It carries out the reaction 2-[(2R,5Z)-2-carboxy-4-methylthiazol-5(2H)-ylidene]ethyl phosphate + 4-amino-2-methyl-5-(diphosphooxymethyl)pyrimidine + 2 H(+) = thiamine phosphate + CO2 + diphosphate. The catalysed reaction is 2-(2-carboxy-4-methylthiazol-5-yl)ethyl phosphate + 4-amino-2-methyl-5-(diphosphooxymethyl)pyrimidine + 2 H(+) = thiamine phosphate + CO2 + diphosphate. The enzyme catalyses 4-methyl-5-(2-phosphooxyethyl)-thiazole + 4-amino-2-methyl-5-(diphosphooxymethyl)pyrimidine + H(+) = thiamine phosphate + diphosphate. It functions in the pathway cofactor biosynthesis; thiamine diphosphate biosynthesis; thiamine phosphate from 4-amino-2-methyl-5-diphosphomethylpyrimidine and 4-methyl-5-(2-phosphoethyl)-thiazole: step 1/1. Condenses 4-methyl-5-(beta-hydroxyethyl)thiazole monophosphate (THZ-P) and 2-methyl-4-amino-5-hydroxymethyl pyrimidine pyrophosphate (HMP-PP) to form thiamine monophosphate (TMP). This Saccharopolyspora erythraea (strain ATCC 11635 / DSM 40517 / JCM 4748 / NBRC 13426 / NCIMB 8594 / NRRL 2338) protein is Thiamine-phosphate synthase.